We begin with the raw amino-acid sequence, 189 residues long: Elongation factor P (189 aa).

This sequence belongs to the elongation factor P family.

Its subcellular location is the cytoplasm. The protein operates within protein biosynthesis; polypeptide chain elongation. Involved in peptide bond synthesis. Stimulates efficient translation and peptide-bond synthesis on native or reconstituted 70S ribosomes in vitro. Probably functions indirectly by altering the affinity of the ribosome for aminoacyl-tRNA, thus increasing their reactivity as acceptors for peptidyl transferase. This Campylobacter jejuni subsp. doylei (strain ATCC BAA-1458 / RM4099 / 269.97) protein is Elongation factor P.